We begin with the raw amino-acid sequence, 392 residues long: Speckle-type POZ protein-like A (392 aa).

The MATH domain occupies 31–161 (KFSYMWTINN…DDKLTLFCEV (131 aa)). The 68-residue stretch at 200–267 (TDCSLYVGGQ…IYTGKAPNLE (68 aa)) folds into the BTB domain.

The protein belongs to the Tdpoz family. Homodimer. Heterodimer with SPOP. Component of cullin-RING-based BCR (BTB-CUL3-RBX1) E3 ubiquitin-protein ligase complexes containing homodimeric SPOPL or the heterodimer formed by SPOP and SPOPL.

The protein localises to the nucleus. It participates in protein modification; protein ubiquitination. Functionally, component of a cullin-RING-based BCR (BTB-CUL3-RBX1) E3 ubiquitin-protein ligase complex that mediates the ubiquitination and subsequent proteasomal degradation of target proteins, but with relatively low efficiency. The protein is Speckle-type POZ protein-like A (spopla) of Danio rerio (Zebrafish).